The chain runs to 269 residues: Shikimate dehydrogenase (NADP(+)) (269 aa).

Shikimate-binding positions include 17–19 (SKS) and threonine 64. Catalysis depends on lysine 68, which acts as the Proton acceptor. Residue glutamate 80 coordinates NADP(+). Shikimate is bound by residues asparagine 89 and aspartate 105. Residues 130–134 (GAGGA), 154–159 (NRTHAK), and methionine 213 each bind NADP(+). Position 215 (tyrosine 215) interacts with shikimate. Residue glycine 237 participates in NADP(+) binding.

It belongs to the shikimate dehydrogenase family. As to quaternary structure, homodimer.

The catalysed reaction is shikimate + NADP(+) = 3-dehydroshikimate + NADPH + H(+). Its pathway is metabolic intermediate biosynthesis; chorismate biosynthesis; chorismate from D-erythrose 4-phosphate and phosphoenolpyruvate: step 4/7. In terms of biological role, involved in the biosynthesis of the chorismate, which leads to the biosynthesis of aromatic amino acids. Catalyzes the reversible NADPH linked reduction of 3-dehydroshikimate (DHSA) to yield shikimate (SA). This is Shikimate dehydrogenase (NADP(+)) from Neisseria pharyngis.